Reading from the N-terminus, the 696-residue chain is Neurogenic protein big brain (696 aa).

Residues 1 to 71 are Cytoplasmic-facing; it reads MADESLHTVP…LEFWRSIISE (71 aa). Ser-46 carries the phosphoserine modification. Thr-47 carries the post-translational modification Phosphothreonine. A helical transmembrane segment spans residues 72 to 93; the sequence is CLASFMYVFIVCGAAAGVGVGA. Over 94–97 the chain is Extracellular; sequence SVSS. Residues 98-118 traverse the membrane as a helical segment; that stretch reads VLLATALASGLAMATLTQCFL. Topologically, residues 119 to 143 are cytoplasmic; sequence HISGAHINPAVTLALCVVRSISPIR. Positions 126–128 match the NPA 1 motif; it reads NPA. The helical transmembrane segment at 144 to 167 threads the bilayer; the sequence is AAMYITAQCGGGIAGAALLYGVTV. The Extracellular portion of the chain corresponds to 168 to 189; it reads PGYQGNLQAAISHSAALAAWER. A helical membrane pass occupies residues 190–208; that stretch reads FGVEFILTFLVVLCYFVST. The Cytoplasmic segment spans residues 209–213; the sequence is DPMKK. The chain crosses the membrane as a helical span at residues 214–234; the sequence is FMGNSAASIGCAYSACCFVSM. The Extracellular segment spans residues 235-256; sequence PYLNPARSLGPSFVLNKWDSHW. The NPA 2 motif lies at 238–240; that stretch reads NPA. A helical transmembrane segment spans residues 257–273; that stretch reads VYWFGPLVGGMASGLVY. Tyr-273 carries the post-translational modification Phosphotyrosine; by Src. Residues 274–696 are Cytoplasmic-facing; sequence EYIFNSRNRN…HYGMLPLRPN (423 aa). Ser-300 is modified (phosphoserine). Positions 314 to 345 are disordered; that stretch reads NKYQQSQGTYPRGQSNGNGGGQAAGNGQHQAA. A Phosphotyrosine; by Abl modification is found at Tyr-367. Tyr-384 carries the phosphotyrosine; by Src modification. Ser-394 bears the Phosphoserine mark. Disordered stretches follow at residues 436 to 634 and 650 to 696; these read MRTQ…KVSA and TSQG…LRPN. Composition is skewed to low complexity over residues 439 to 451 and 462 to 472; these read QQQQ…QQQQ and QNQNVQNQMQQ. Phosphotyrosine; by Src is present on Tyr-478. A compositionally biased stretch (low complexity) spans 487–532; the sequence is QQQPIQQQQQQQQQQQLQQQQPNMGVQQQQMQPPPQMMSDPQQQPQ. Residues 549 to 558 show a composition bias toward basic and acidic residues; it reads GNHKYDRRDP. Ser-576 is subject to Phosphoserine. Residues 576 to 587 show a composition bias toward low complexity; sequence SDDSSYGSYHGS. Residues 599–616 are compositionally biased toward pro residues; sequence EPSPPPPPMLMYAPPPQP. Tyr-610 carries the post-translational modification Phosphotyrosine; by Abl. Residues 659-686 are compositionally biased toward low complexity; the sequence is QQQQQQQQQQQQQQQQQQQQMMMQQQQQ.

This sequence belongs to the MIP/aquaporin (TC 1.A.8) family. Phosphorylated at its C-terminus. As to expression, detected in all tissues with neurogenic abilities, for example the neurogenic ectoderm.

The protein localises to the membrane. Essential for proper differentiation of ectoderm. Acts synergistically with neurogenic locus proteins Notch and Delta during the separation of neural and epidermal cell lineages in response to the lateral inhibition signal. Voltage-insensitive monovalent cation channel. Ion transport is blocked by the presence of divalent cations. The chain is Neurogenic protein big brain (bib) from Drosophila melanogaster (Fruit fly).